The following is a 209-amino-acid chain: Protein Bel-1 (209 aa).

Disordered stretches follow at residues 1–30 (MASK…LDLT), 123–143 (FLNS…PATS), and 156–185 (CSRP…GESG). 2 stretches are compositionally biased toward polar residues: residues 21-30 (SHSTSGLDLT) and 132-143 (TPKTDPTRPATS).

Its function is as follows. Transcriptional transactivator that activates the viral internal promoter (IP), thereby enhancing its own expression. This transactivation is repressed by nuclear factor I. Also transactivates the long terminal repeat (LTR) promoter, thereby inducing structural gene expression, initiating the late phase of infection. It is therefore a key regulator of viral gene expression. It directly binds to and activates DNA target sites of viral promoters and those of distinct cellular genes. Required for viral replication. The protein is Protein Bel-1 (bel1) of Felis catus (Cat).